Consider the following 274-residue polypeptide: tRNA (mnm(5)s(2)U34)-methyltransferase, chloroplastic (274 aa).

Residues M1 to C50 constitute a chloroplast transit peptide. 5 residues coordinate S-adenosyl-L-methionine: N108, N110, D134, Q136, and H166.

The protein belongs to the methyltransferase superfamily. MnmM family.

It localises to the plastid. Its subcellular location is the chloroplast. It catalyses the reaction 5-aminomethyl-2-thiouridine(34) in tRNA + S-adenosyl-L-methionine = 5-methylaminomethyl-2-thiouridine(34) in tRNA + S-adenosyl-L-homocysteine + H(+). The protein operates within tRNA modification. Involved in the biosynthesis of 5-methylaminomethyl-2-thiouridine (mnm(5)s(2)U) at the wobble position (U34) in tRNA. Catalyzes the transfer of a methyl group from S-adenosyl-L-methionine to nm(5)s(2)U34 to form mnm(5)s(2)U34. In Arabidopsis thaliana (Mouse-ear cress), this protein is tRNA (mnm(5)s(2)U34)-methyltransferase, chloroplastic.